A 219-amino-acid polypeptide reads, in one-letter code: Hemolysin-3 (219 aa).

7 helical membrane passes run 19–39 (AITHGIGAILSIPALIILIIH), 49–69 (VVAFTVYGVSMFLLYLFSTLL), 83–103 (ILDHSAIYLLIAGTYTPFLLI), 112–132 (TLLAIIWTLAIGGIIFKIFFV), 138–158 (ASTLCYIIMGWLIIVAIKPLY), 165–185 (GFSLLLAGGILYSVGAIFFLW), and 194–214 (IWHLFVLGGSAMMFFCVLFYV).

Belongs to the UPF0073 (Hly-III) family.

The protein resides in the cell membrane. Functionally, might be virulent against a mammalian host; when expressed in E.coli, the soluble extract has hemolytic activity on human erythrocytes. The activity is not inhibited by cholesterol or activated by 2-mercaptoethanol. Might be pore-forming protein. Its in vivo role in virulence is untested, nor has it been shown to be secreted by B.cereus. The chain is Hemolysin-3 from Bacillus cereus.